Here is a 287-residue protein sequence, read N- to C-terminus: uncharacterized protein (287 aa).

A disordered region spans residues 1–23 (MTVSDSPAQRQTPPQTPGGTAPR). Positions 7-23 (PAQRQTPPQTPGGTAPR) are enriched in low complexity. 3 residues coordinate Mg(2+): Asp31, Asp33, and Asp204.

Belongs to the HAD-like hydrolase superfamily. SerB family.

This is an uncharacterized protein from Mycobacterium tuberculosis (strain CDC 1551 / Oshkosh).